The following is a 269-amino-acid chain: Eukaryotic translation initiation factor 3 subunit G-1 (269 aa).

The region spanning 188 to 266 (AAIRISNLSE…LILSVEWSKP (79 aa)) is the RRM domain. A Phosphoserine modification is found at serine 198.

The protein belongs to the eIF-3 subunit G family. Component of the eukaryotic translation initiation factor 3 (eIF-3) complex. The eIF-3 complex interacts with pix.

The protein resides in the cytoplasm. In terms of biological role, RNA-binding component of the eukaryotic translation initiation factor 3 (eIF-3) complex, which is involved in protein synthesis of a specialized repertoire of mRNAs and, together with other initiation factors, stimulates binding of mRNA and methionyl-tRNAi to the 40S ribosome. The eIF-3 complex specifically targets and initiates translation of a subset of mRNAs involved in cell proliferation. This subunit can bind 18S rRNA. The sequence is that of Eukaryotic translation initiation factor 3 subunit G-1 from Drosophila melanogaster (Fruit fly).